Consider the following 495-residue polypeptide: ATP synthase subunit alpha, chloroplastic (495 aa).

An ATP-binding site is contributed by glycine 170–threonine 177.

Belongs to the ATPase alpha/beta chains family. In terms of assembly, F-type ATPases have 2 components, CF(1) - the catalytic core - and CF(0) - the membrane proton channel. CF(1) has five subunits: alpha(3), beta(3), gamma(1), delta(1), epsilon(1). CF(0) has four main subunits: a, b, b' and c.

The protein localises to the plastid. It localises to the chloroplast thylakoid membrane. It catalyses the reaction ATP + H2O + 4 H(+)(in) = ADP + phosphate + 5 H(+)(out). Its function is as follows. Produces ATP from ADP in the presence of a proton gradient across the membrane. The alpha chain is a regulatory subunit. The polypeptide is ATP synthase subunit alpha, chloroplastic (Cyanidioschyzon merolae (strain NIES-3377 / 10D) (Unicellular red alga)).